A 115-amino-acid chain; its full sequence is Large ribosomal subunit protein bL20c (115 aa).

This sequence belongs to the bacterial ribosomal protein bL20 family.

The protein resides in the plastid. It localises to the chloroplast. Binds directly to 23S ribosomal RNA and is necessary for the in vitro assembly process of the 50S ribosomal subunit. It is not involved in the protein synthesizing functions of that subunit. The chain is Large ribosomal subunit protein bL20c from Cycas taitungensis (Prince sago).